The chain runs to 149 residues: Large ribosomal subunit protein bL9 (149 aa).

Belongs to the bacterial ribosomal protein bL9 family.

Functionally, binds to the 23S rRNA. This Helicobacter pylori (strain G27) protein is Large ribosomal subunit protein bL9.